A 172-amino-acid chain; its full sequence is C-phycocyanin beta chain (172 aa).

Residues asparagine 35, aspartate 39, asparagine 72, arginine 77, cysteine 82, 82-88, 149-151, and cysteine 153 contribute to the (2R,3E)-phycocyanobilin site; these read CLRDMEI and TTG. Asparagine 72 is modified (N4-methylasparagine).

This sequence belongs to the phycobiliprotein family. Heterodimer of an alpha and a beta subunit. Dimers further assemble into trimers and the trimers into hexamers. The basic functional unit of phycobiliproteins is a ring-shaped hexamer formed from two back-to-back trimers contacting via the alpha chain subunits. The trimers are composed of alpha/beta subunit heterodimers arranged around a three-fold axis of symmetry. The phycoerythrins also contain a gamma subunit which is located in the center of the hexamer. Post-translationally, contains two covalently linked phycocyanobilin chromophores.

It localises to the plastid. It is found in the chloroplast thylakoid membrane. Its function is as follows. Light-harvesting photosynthetic tetrapyrrole chromophore-protein from the phycobiliprotein complex (phycobilisome, PBS). Phycocyanin is the major phycobiliprotein in the PBS rod. The polypeptide is C-phycocyanin beta chain (cpcB) (Galdieria sulphuraria (Red alga)).